The following is a 176-amino-acid chain: Transcriptional repressor MprA (176 aa).

In terms of domain architecture, HTH marR-type spans 26 to 160; it reads EILLTRLCMH…LEQITRKLLS (135 aa).

Its function is as follows. Negative regulator of the multidrug operon emrAB. In Escherichia coli O157:H7, this protein is Transcriptional repressor MprA (mprA).